The chain runs to 121 residues: Immunoglobulin kappa variable 2-40 (121 aa).

The first 19 residues, 1–19, serve as a signal peptide directing secretion; the sequence is MRLPAQLLGLLMLWVPGSS. Residues 20-121 form the Ig-like domain; that stretch reads EDIVMTQTPL…YYCMQRIEFP (102 aa). Residues 21–43 are framework-1; that stretch reads DIVMTQTPLSLPVTPGEPASISC. Residues C43 and C114 are joined by a disulfide bond. Positions 44-60 are complementarity-determining-1; that stretch reads RSSQSLLDSDDGNTYLD. Residues 61–75 form a framework-2 region; that stretch reads WYLQKPGQSPQLLIY. The complementarity-determining-2 stretch occupies residues 76-82; it reads TLSYRAS. A framework-3 region spans residues 83–114; that stretch reads GVPDRFSGSGSGTDFTLKISRVEAEDVGVYYC. Residues 115-121 form a complementarity-determining-3 region; it reads MQRIEFP.

As to quaternary structure, immunoglobulins are composed of two identical heavy chains and two identical light chains; disulfide-linked.

It localises to the secreted. It is found in the cell membrane. Its function is as follows. V region of the variable domain of immunoglobulin light chains that participates in the antigen recognition. Immunoglobulins, also known as antibodies, are membrane-bound or secreted glycoproteins produced by B lymphocytes. In the recognition phase of humoral immunity, the membrane-bound immunoglobulins serve as receptors which, upon binding of a specific antigen, trigger the clonal expansion and differentiation of B lymphocytes into immunoglobulins-secreting plasma cells. Secreted immunoglobulins mediate the effector phase of humoral immunity, which results in the elimination of bound antigens. The antigen binding site is formed by the variable domain of one heavy chain, together with that of its associated light chain. Thus, each immunoglobulin has two antigen binding sites with remarkable affinity for a particular antigen. The variable domains are assembled by a process called V-(D)-J rearrangement and can then be subjected to somatic hypermutations which, after exposure to antigen and selection, allow affinity maturation for a particular antigen. The protein is Immunoglobulin kappa variable 2-40 of Homo sapiens (Human).